A 229-amino-acid polypeptide reads, in one-letter code: Ribonuclease T (229 aa).

One can recognise an Exonuclease domain in the interval 23 to 197 (VIIDVETAGF…YDTERTAKLF (175 aa)). Mg(2+) is bound by residues D26, E28, H184, and D189. The Proton donor/acceptor role is filled by H184.

The protein belongs to the RNase T family. Homodimer. Mg(2+) is required as a cofactor.

Trims short 3' overhangs of a variety of RNA species, leaving a one or two nucleotide 3' overhang. Responsible for the end-turnover of tRNA: specifically removes the terminal AMP residue from uncharged tRNA (tRNA-C-C-A). Also appears to be involved in tRNA biosynthesis. The protein is Ribonuclease T of Haemophilus influenzae (strain 86-028NP).